A 327-amino-acid polypeptide reads, in one-letter code: Lipoyl synthase (327 aa).

The [4Fe-4S] cluster site is built by cysteine 72, cysteine 77, cysteine 83, cysteine 98, cysteine 102, cysteine 105, and serine 313. Residues 83–302 (CWSHGTATIM…RKVGLEKGFL (220 aa)) form the Radical SAM core domain.

This sequence belongs to the radical SAM superfamily. Lipoyl synthase family. [4Fe-4S] cluster serves as cofactor.

It localises to the cytoplasm. The enzyme catalyses [[Fe-S] cluster scaffold protein carrying a second [4Fe-4S](2+) cluster] + N(6)-octanoyl-L-lysyl-[protein] + 2 oxidized [2Fe-2S]-[ferredoxin] + 2 S-adenosyl-L-methionine + 4 H(+) = [[Fe-S] cluster scaffold protein] + N(6)-[(R)-dihydrolipoyl]-L-lysyl-[protein] + 4 Fe(3+) + 2 hydrogen sulfide + 2 5'-deoxyadenosine + 2 L-methionine + 2 reduced [2Fe-2S]-[ferredoxin]. The protein operates within protein modification; protein lipoylation via endogenous pathway; protein N(6)-(lipoyl)lysine from octanoyl-[acyl-carrier-protein]: step 2/2. In terms of biological role, catalyzes the radical-mediated insertion of two sulfur atoms into the C-6 and C-8 positions of the octanoyl moiety bound to the lipoyl domains of lipoate-dependent enzymes, thereby converting the octanoylated domains into lipoylated derivatives. The protein is Lipoyl synthase of Francisella tularensis subsp. holarctica (strain FTNF002-00 / FTA).